The following is a 542-amino-acid chain: Zinc finger CCHC domain-containing protein 7 (542 aa).

The tract at residues 110-144 (QAQEKTQSPATPRSNKVANKCKRSNKKPEPEESPS) is disordered. Polar residues predominate over residues 112 to 126 (QEKTQSPATPRSNKV). Glycyl lysine isopeptide (Lys-Gly) (interchain with G-Cter in SUMO2) cross-links involve residues lysine 129 and lysine 136. Serine 142 carries the phosphoserine modification. Glycyl lysine isopeptide (Lys-Gly) (interchain with G-Cter in SUMO2) cross-links involve residues lysine 236 and lysine 251. 3 consecutive CCHC-type zinc fingers follow at residues 238–255 (VTCR…NCPL), 260–277 (RPCC…GCPA), and 301–318 (KRCD…ACPE). Lysine 336 participates in a covalent cross-link: Glycyl lysine isopeptide (Lys-Gly) (interchain with G-Cter in SUMO2). The CCHC-type 4 zinc-finger motif lies at 345–362 (VYCYNCAQKGHYGHECTE). Residues 396–542 (LKDIKKNGDF…RKKKPKSSGF (147 aa)) are disordered. Residue lysine 410 forms a Glycyl lysine isopeptide (Lys-Gly) (interchain with G-Cter in SUMO2) linkage. Positions 412 to 421 (PHGEETDRYH) are enriched in basic and acidic residues. The segment covering 422–435 (HDRRKSRFSGKRSR) has biased composition (basic residues). Lysine 432 is covalently cross-linked (Glycyl lysine isopeptide (Lys-Gly) (interchain with G-Cter in SUMO2)). Over residues 436 to 456 (WPRESKETQKEKTRGREGEKH) the composition is skewed to basic and acidic residues. Lysine 474 is covalently cross-linked (Glycyl lysine isopeptide (Lys-Gly) (interchain with G-Cter in SUMO2)). Positions 474-489 (KPNSSSSSNSQKPSKS) are enriched in low complexity. Phosphoserine occurs at positions 478 and 480. Residues lysine 485 and lysine 488 each participate in a glycyl lysine isopeptide (Lys-Gly) (interchain with G-Cter in SUMO2) cross-link. Basic and acidic residues-rich tracts occupy residues 499-510 (LREEKLRRESMR) and 518-528 (FVEDGSHDDLF). Lysine 531 participates in a covalent cross-link: Glycyl lysine isopeptide (Lys-Gly) (interchain with G-Cter in SUMO2). The span at 531 to 542 (KQRKKKPKSSGF) shows a compositional bias: basic residues.

Component of a nucleolar TRAMP-like complex, an ATP-dependent exosome regulatory complex consisting of a helicase (MTREX), an oligadenylate polymerase (TENT4B or TENT4A), and a substrate specific RNA-binding factor (ZCCHC7 or ZCCHC8). Several TRAMP-like complexes exist with specific compositions and are associated with nuclear, or nucleolar RNA exosomes.

The protein resides in the nucleus. Its subcellular location is the nucleolus. The chain is Zinc finger CCHC domain-containing protein 7 (Zcchc7) from Rattus norvegicus (Rat).